The sequence spans 426 residues: Protein CgeD (426 aa).

The protein to B.subtilis spore coat polysaccharide biosynthesis protein SpsA.

In terms of biological role, may be involved in maturation of the outermost layer of the spore. In Bacillus subtilis (strain 168), this protein is Protein CgeD (cgeD).